A 294-amino-acid chain; its full sequence is 33 kDa chaperonin (294 aa).

2 cysteine pairs are disulfide-bonded: cysteine 239–cysteine 241 and cysteine 272–cysteine 275.

This sequence belongs to the HSP33 family. In terms of processing, under oxidizing conditions two disulfide bonds are formed involving the reactive cysteines. Under reducing conditions zinc is bound to the reactive cysteines and the protein is inactive.

It is found in the cytoplasm. Functionally, redox regulated molecular chaperone. Protects both thermally unfolding and oxidatively damaged proteins from irreversible aggregation. Plays an important role in the bacterial defense system toward oxidative stress. The polypeptide is 33 kDa chaperonin (Listeria monocytogenes serotype 4b (strain CLIP80459)).